Reading from the N-terminus, the 162-residue chain is Crossover junction endodeoxyribonuclease RuvC (162 aa).

Residues Asp8, Glu69, and His141 contribute to the active site. Mg(2+) is bound by residues Asp8, Glu69, and His141.

This sequence belongs to the RuvC family. As to quaternary structure, homodimer which binds Holliday junction (HJ) DNA. The HJ becomes 2-fold symmetrical on binding to RuvC with unstacked arms; it has a different conformation from HJ DNA in complex with RuvA. In the full resolvosome a probable DNA-RuvA(4)-RuvB(12)-RuvC(2) complex forms which resolves the HJ. Mg(2+) serves as cofactor.

It is found in the cytoplasm. It carries out the reaction Endonucleolytic cleavage at a junction such as a reciprocal single-stranded crossover between two homologous DNA duplexes (Holliday junction).. The RuvA-RuvB-RuvC complex processes Holliday junction (HJ) DNA during genetic recombination and DNA repair. Endonuclease that resolves HJ intermediates. Cleaves cruciform DNA by making single-stranded nicks across the HJ at symmetrical positions within the homologous arms, yielding a 5'-phosphate and a 3'-hydroxyl group; requires a central core of homology in the junction. The consensus cleavage sequence is 5'-(A/T)TT(C/G)-3'. Cleavage occurs on the 3'-side of the TT dinucleotide at the point of strand exchange. HJ branch migration catalyzed by RuvA-RuvB allows RuvC to scan DNA until it finds its consensus sequence, where it cleaves and resolves the cruciform DNA. This Wolbachia sp. subsp. Brugia malayi (strain TRS) protein is Crossover junction endodeoxyribonuclease RuvC.